The primary structure comprises 319 residues: ATP-dependent 6-phosphofructokinase (319 aa).

Glycine 11 is a binding site for ATP. 21-25 (RAVVR) contributes to the ADP binding site. Residues 72–73 (RY) and 102–105 (GDGS) each bind ATP. Residue aspartate 103 coordinates Mg(2+). A substrate-binding site is contributed by 125–127 (TID). Residue aspartate 127 is the Proton acceptor of the active site. Arginine 154 serves as a coordination point for ADP. Residues arginine 162 and 169-171 (MGR) contribute to the substrate site. ADP contacts are provided by residues 185–187 (GAE), arginine 211, and 213–215 (KKH). Residues glutamate 222, arginine 243, and 249–252 (HVQR) contribute to the substrate site.

Belongs to the phosphofructokinase type A (PFKA) family. ATP-dependent PFK group I subfamily. Prokaryotic clade 'B1' sub-subfamily. In terms of assembly, homotetramer. The cofactor is Mg(2+).

It is found in the cytoplasm. It catalyses the reaction beta-D-fructose 6-phosphate + ATP = beta-D-fructose 1,6-bisphosphate + ADP + H(+). It participates in carbohydrate degradation; glycolysis; D-glyceraldehyde 3-phosphate and glycerone phosphate from D-glucose: step 3/4. Allosterically activated by ADP and other diphosphonucleosides, and allosterically inhibited by phosphoenolpyruvate. Its function is as follows. Catalyzes the phosphorylation of D-fructose 6-phosphate to fructose 1,6-bisphosphate by ATP, the first committing step of glycolysis. This Listeria monocytogenes serotype 4b (strain CLIP80459) protein is ATP-dependent 6-phosphofructokinase.